Consider the following 185-residue polypeptide: Ribosome-recycling factor (185 aa).

Residues 144-164 (KEGEAGEDEVGRAEKDLDKTT) are disordered.

Belongs to the RRF family.

Its subcellular location is the cytoplasm. Responsible for the release of ribosomes from messenger RNA at the termination of protein biosynthesis. May increase the efficiency of translation by recycling ribosomes from one round of translation to another. The sequence is that of Ribosome-recycling factor from Mycobacterium tuberculosis (strain CDC 1551 / Oshkosh).